The chain runs to 151 residues: uncharacterized protein (151 aa).

This is an uncharacterized protein from Rhodobacter capsulatus (Rhodopseudomonas capsulata).